The chain runs to 181 residues: ATP synthase subunit b, chloroplastic (181 aa).

Residues 27–49 (LATNPINLSVVLGVVIYFGKGVL) form a helical membrane-spanning segment.

Belongs to the ATPase B chain family. As to quaternary structure, F-type ATPases have 2 components, F(1) - the catalytic core - and F(0) - the membrane proton channel. F(1) has five subunits: alpha(3), beta(3), gamma(1), delta(1), epsilon(1). F(0) has four main subunits: a(1), b(1), b'(1) and c(10-14). The alpha and beta chains form an alternating ring which encloses part of the gamma chain. F(1) is attached to F(0) by a central stalk formed by the gamma and epsilon chains, while a peripheral stalk is formed by the delta, b and b' chains.

The protein localises to the plastid. The protein resides in the chloroplast thylakoid membrane. Functionally, f(1)F(0) ATP synthase produces ATP from ADP in the presence of a proton or sodium gradient. F-type ATPases consist of two structural domains, F(1) containing the extramembraneous catalytic core and F(0) containing the membrane proton channel, linked together by a central stalk and a peripheral stalk. During catalysis, ATP synthesis in the catalytic domain of F(1) is coupled via a rotary mechanism of the central stalk subunits to proton translocation. Its function is as follows. Component of the F(0) channel, it forms part of the peripheral stalk, linking F(1) to F(0). In Lemna minor (Common duckweed), this protein is ATP synthase subunit b, chloroplastic.